The sequence spans 330 residues: Mas-related G-protein coupled receptor member B8 (330 aa).

Over 1-33 (MDSSFPDWNIEFREQNESYFMESSSCDMSLAMS) the chain is Extracellular. Residue Asn-16 is glycosylated (N-linked (GlcNAc...) asparagine). The chain crosses the membrane as a helical span at residues 34 to 54 (LLSIIIAIIGLTGNVIVLQLL). Topologically, residues 55-62 (GFHMHRNA) are cytoplasmic. Residues 63-83 (FSVYIFNLSGANFLFLCTHIV) traverse the membrane as a helical segment. The Extracellular portion of the chain corresponds to 84 to 101 (FSLENLIRQFHYIDIHMA). Residues 102-122 (LFSVNVTILAYLAGVSMITAI) traverse the membrane as a helical segment. At 123 to 146 (SVEYWLSVLWPTWYHAQRPKHTST) the chain is on the cytoplasmic side. Residues 147–167 (VICTLLWVFSLLLTLWNWIIC) form a helical membrane-spanning segment. Topologically, residues 168-177 (KVLDYIYNWD) are extracellular. Residues 178–198 (MCWKLALIIVVWLLVLFVVLS) form a helical membrane-spanning segment. Residues 199-219 (RSNQALLFRVFCGSQQTPVTR) are Cytoplasmic-facing. Residues 220-240 (LLVTIMLTALVVLICGFGIGI) form a helical membrane-spanning segment. Residues 241 to 260 (CFFYWKKEENSIMPCGYFYE) are Extracellular-facing. The helical transmembrane segment at 261–281 (TILLLSGVNSCANPIICLFVG) threads the bilayer. Residues 282–330 (SIKHCQFQCGTLRLILQRAIQESPEEEDEEVEEVVEQEGGEEDEESTTL) are Cytoplasmic-facing. Positions 302-330 (QESPEEEDEEVEEVVEQEGGEEDEESTTL) are disordered. A compositionally biased stretch (acidic residues) spans 304 to 330 (SPEEEDEEVEEVVEQEGGEEDEESTTL).

This sequence belongs to the G-protein coupled receptor 1 family. Mas subfamily.

The protein localises to the membrane. In terms of biological role, orphan receptor. Probably involved in the function of nociceptive neurons. May regulate nociceptor function and/or development, including the sensation or modulation of pain. The polypeptide is Mas-related G-protein coupled receptor member B8 (Mrgprb8) (Mus musculus (Mouse)).